Here is a 480-residue protein sequence, read N- to C-terminus: Glucosylglycerol phosphorylase (480 aa).

D190 acts as the Nucleophile in catalysis. Substrate is bound at residue Y194. The active-site Proton donor is E231. Q336 lines the substrate pocket.

Belongs to the glycosyl hydrolase 13 family. Sucrose phosphorylase subfamily.

It catalyses the reaction 2-O-(alpha-D-glucopyranosyl)glycerol + phosphate = alpha-D-glucose 1-phosphate + glycerol. In terms of biological role, catalyzes the reversible phosphorolysis of 2-O-alpha-D-glucosylglycerol with retention of the anomeric configuration, forming alpha-D-glucose 1-phosphate and glycerol. Has most likely a catabolic role, either regulating the intracellular levels of glucosylglycerol, which acts as a compatible solute, or degrading it when the environmental conditions change. Cannot catalyze the phosphorolysis of sucrose or glucosylglycerate. The protein is Glucosylglycerol phosphorylase of Marinobacter adhaerens (strain DSM 23420 / HP15).